The following is a 150-amino-acid chain: Large ribosomal subunit protein bL9 (150 aa).

This sequence belongs to the bacterial ribosomal protein bL9 family.

Functionally, binds to the 23S rRNA. This Limosilactobacillus reuteri (strain DSM 20016) (Lactobacillus reuteri) protein is Large ribosomal subunit protein bL9.